Consider the following 48-residue polypeptide: Osteocalcin (48 aa).

A Gla domain is found at 1–46 (SFAVGSSYGAAPDPLEAQREVCELNPDCDELADHIGFQEAYRRFYG). Glutamate 16, glutamate 20, glutamate 23, and aspartate 29 together coordinate Ca(2+). Glutamate 16, glutamate 20, and glutamate 23 each carry 4-carboxyglutamate. The cysteines at positions 22 and 28 are disulfide-linked.

This sequence belongs to the osteocalcin/matrix Gla protein family. In terms of processing, gamma-carboxyglutamate residues are formed by vitamin K dependent carboxylation by GGCX. These residues are essential for the binding of calcium.

Its subcellular location is the secreted. Functionally, the carboxylated form is one of the main organic components of the bone matrix, which constitutes 1-2% of the total bone protein. The carboxylated form binds strongly to apatite and calcium. The chain is Osteocalcin (BGLAP) from Dromaius novaehollandiae (Emu).